Consider the following 66-residue polypeptide: MGQKTALGSLLKAIGNSGQGKVVPGWGAVPVMTVIGLLLLVFLVILLQIYNQSLLLQGFSVDWNGN.

A helical transmembrane segment spans residues 27-47 (GAVPVMTVIGLLLLVFLVILL).

It belongs to the PsbH family. As to quaternary structure, PSII is composed of 1 copy each of membrane proteins PsbA, PsbB, PsbC, PsbD, PsbE, PsbF, PsbH, PsbI, PsbJ, PsbK, PsbL, PsbM, PsbT, PsbX, PsbY, Psb30/Ycf12, peripheral proteins PsbO, CyanoQ (PsbQ), PsbU, PsbV and a large number of cofactors. It forms dimeric complexes.

Its subcellular location is the cellular thylakoid membrane. Its function is as follows. One of the components of the core complex of photosystem II (PSII), required for its stability and/or assembly. PSII is a light-driven water:plastoquinone oxidoreductase that uses light energy to abstract electrons from H(2)O, generating O(2) and a proton gradient subsequently used for ATP formation. It consists of a core antenna complex that captures photons, and an electron transfer chain that converts photonic excitation into a charge separation. The protein is Photosystem II reaction center protein H of Prochlorococcus marinus (strain MIT 9215).